The sequence spans 299 residues: Zeta-sarcoglycan (299 aa).

At 1 to 37 the chain is on the cytoplasmic side; it reads MTREQYILATQQNNLPRTENAQLYPVGIYGWRKRCLY. A helical; Signal-anchor for type II membrane protein transmembrane segment spans residues 38–58; sequence FFVLLLLVTMIVNLAMTIWIL. The Extracellular portion of the chain corresponds to 59-299; sequence KVMNFTVDGM…QSSSNICLWS (241 aa). N-linked (GlcNAc...) asparagine glycans are attached at residues Asn-62 and Asn-110. Cys-273 and Cys-289 form a disulfide bridge.

This sequence belongs to the sarcoglycan beta/delta/gamma/zeta family.

It localises to the cell membrane. The protein resides in the sarcolemma. Its subcellular location is the cytoplasm. It is found in the cytoskeleton. In terms of biological role, component of the sarcoglycan complex, a subcomplex of the dystrophin-glycoprotein complex which forms a link between the F-actin cytoskeleton and the extracellular matrix. May play a role in the maintenance of striated muscle membrane stability. This chain is Zeta-sarcoglycan (SGCZ), found in Homo sapiens (Human).